Consider the following 384-residue polypeptide: Chaperone protein DnaJ (384 aa).

The J domain occupies 5–70 (DYYEVLGVAR…QKKAAYDRFG (66 aa)). Residues 138–216 (GAQKTINVPG…CRGAGRVQKE (79 aa)) form a CR-type zinc finger. Residues cysteine 151, cysteine 154, cysteine 168, cysteine 171, cysteine 190, cysteine 193, cysteine 204, and cysteine 207 each coordinate Zn(2+). CXXCXGXG motif repeat units follow at residues 151 to 158 (CAACNGTG), 168 to 175 (CPTCSGMG), 190 to 197 (CPTCSGHG), and 204 to 211 (CQECRGAG). Residues 300–322 (KVPPGTQSGKQLRLRGKGMPPLR) form a disordered region.

It belongs to the DnaJ family. In terms of assembly, homodimer. The cofactor is Zn(2+).

The protein resides in the cytoplasm. Participates actively in the response to hyperosmotic and heat shock by preventing the aggregation of stress-denatured proteins and by disaggregating proteins, also in an autonomous, DnaK-independent fashion. Unfolded proteins bind initially to DnaJ; upon interaction with the DnaJ-bound protein, DnaK hydrolyzes its bound ATP, resulting in the formation of a stable complex. GrpE releases ADP from DnaK; ATP binding to DnaK triggers the release of the substrate protein, thus completing the reaction cycle. Several rounds of ATP-dependent interactions between DnaJ, DnaK and GrpE are required for fully efficient folding. Also involved, together with DnaK and GrpE, in the DNA replication of plasmids through activation of initiation proteins. The protein is Chaperone protein DnaJ of Paracoccus denitrificans (strain Pd 1222).